The primary structure comprises 45 residues: Endo-1,4-beta-xylanase Xyn10A (45 aa).

Belongs to the glycosyl hydrolase 10 (cellulase F) family.

The protein resides in the secreted. The protein localises to the extracellular space. The catalysed reaction is Endohydrolysis of (1-&gt;4)-beta-D-xylosidic linkages in xylans.. It catalyses the reaction Endohydrolysis of (1-&gt;4)-beta-D-glucosidic linkages in cellulose, lichenin and cereal beta-D-glucans.. It functions in the pathway glycan degradation; xylan degradation. Has xylanase, avicelase and cellobiohydrolase activity. In Gloeophyllum trabeum (Brown rot fungus), this protein is Endo-1,4-beta-xylanase Xyn10A.